A 450-amino-acid polypeptide reads, in one-letter code: Sorting nexin-4 (450 aa).

Methionine 1 carries the post-translational modification N-acetylmethionine. The segment at 1–46 is disordered; it reads MEQAPPDPEKLLQPGPLEPLGGPGAVLEAAVGEENEGTREDGSGVD. Over residues 11 to 20 the composition is skewed to low complexity; it reads LLQPGPLEPL. Residues 61-187 enclose the PX domain; sequence SVSEAEKRTG…YSFLTQEGNW (127 aa). A 1,2-diacyl-sn-glycero-3-phospho-(1D-myo-inositol-3-phosphate) is bound by residues arginine 106, serine 108, lysine 132, and arginine 154.

Belongs to the sorting nexin family. As to quaternary structure, heterodimer; heterodimerizes with SNX7 or SNX30. Interacts with WWC1/KIBRA. Identified in a complex with WWC1/KIBRA and dynein components DYNLL1 and DYNC1I2. Interacts with BIN1.

It is found in the early endosome. The protein localises to the early endosome membrane. In terms of biological role, involved in the regulation of endocytosis and in several stages of intracellular trafficking. Plays a role in recycling endocytosed transferrin receptor and prevent its degradation. Involved in autophagosome assembly by regulating trafficking and recycling of phospholipid scramblase ATG9A. In Mus musculus (Mouse), this protein is Sorting nexin-4.